A 192-amino-acid polypeptide reads, in one-letter code: Holliday junction branch migration complex subunit RuvA (192 aa).

The domain I stretch occupies residues 1 to 64; that stretch reads MLGRLTGLLA…EDAQVLFGFL (64 aa). Residues 65–139 form a domain II region; sequence TAPERETFRM…GKLGADLGPA (75 aa). The tract at residues 139-143 is flexible linker; sequence AIGGK. The segment at 144-192 is domain III; that stretch reads PASDAQADILQALIALGYSEREAQAAVKALPAEVGVSDGIKLALKALAR.

Belongs to the RuvA family. In terms of assembly, homotetramer. Forms an RuvA(8)-RuvB(12)-Holliday junction (HJ) complex. HJ DNA is sandwiched between 2 RuvA tetramers; dsDNA enters through RuvA and exits via RuvB. An RuvB hexamer assembles on each DNA strand where it exits the tetramer. Each RuvB hexamer is contacted by two RuvA subunits (via domain III) on 2 adjacent RuvB subunits; this complex drives branch migration. In the full resolvosome a probable DNA-RuvA(4)-RuvB(12)-RuvC(2) complex forms which resolves the HJ.

The protein localises to the cytoplasm. In terms of biological role, the RuvA-RuvB-RuvC complex processes Holliday junction (HJ) DNA during genetic recombination and DNA repair, while the RuvA-RuvB complex plays an important role in the rescue of blocked DNA replication forks via replication fork reversal (RFR). RuvA specifically binds to HJ cruciform DNA, conferring on it an open structure. The RuvB hexamer acts as an ATP-dependent pump, pulling dsDNA into and through the RuvAB complex. HJ branch migration allows RuvC to scan DNA until it finds its consensus sequence, where it cleaves and resolves the cruciform DNA. This chain is Holliday junction branch migration complex subunit RuvA, found in Methylibium petroleiphilum (strain ATCC BAA-1232 / LMG 22953 / PM1).